The sequence spans 721 residues: Ribosomal RNA large subunit methyltransferase K/L (721 aa).

One can recognise a THUMP domain in the interval 56–167 (GMYKACLWSR…REVVTVSIDL (112 aa)).

The protein belongs to the methyltransferase superfamily. RlmKL family.

The protein resides in the cytoplasm. The catalysed reaction is guanosine(2445) in 23S rRNA + S-adenosyl-L-methionine = N(2)-methylguanosine(2445) in 23S rRNA + S-adenosyl-L-homocysteine + H(+). It carries out the reaction guanosine(2069) in 23S rRNA + S-adenosyl-L-methionine = N(2)-methylguanosine(2069) in 23S rRNA + S-adenosyl-L-homocysteine + H(+). Specifically methylates the guanine in position 2445 (m2G2445) and the guanine in position 2069 (m7G2069) of 23S rRNA. The polypeptide is Ribosomal RNA large subunit methyltransferase K/L (Marinomonas sp. (strain MWYL1)).